A 346-amino-acid chain; its full sequence is Probable RNA methyltransferase PSPA7_3453 (346 aa).

Glutamate 91 acts as the Proton acceptor in catalysis. The 227-residue stretch at 94-320 (LLPRGGLCVS…TKVRNSAGQD (227 aa)) folds into the Radical SAM core domain. A disulfide bridge connects residues cysteine 101 and cysteine 325. 3 residues coordinate [4Fe-4S] cluster: cysteine 108, cysteine 112, and cysteine 115. S-adenosyl-L-methionine is bound by residues 153–154 (GE), serine 183, 206–208 (SLH), and asparagine 282. Cysteine 325 serves as the catalytic S-methylcysteine intermediate.

The protein belongs to the radical SAM superfamily. RlmN family. Requires [4Fe-4S] cluster as cofactor.

It localises to the cytoplasm. This chain is Probable RNA methyltransferase PSPA7_3453, found in Pseudomonas paraeruginosa (strain DSM 24068 / PA7) (Pseudomonas aeruginosa (strain PA7)).